Reading from the N-terminus, the 115-residue chain is Large ribosomal subunit protein bL19 (115 aa).

Belongs to the bacterial ribosomal protein bL19 family.

This protein is located at the 30S-50S ribosomal subunit interface and may play a role in the structure and function of the aminoacyl-tRNA binding site. The sequence is that of Large ribosomal subunit protein bL19 from Buchnera aphidicola subsp. Schizaphis graminum (strain Sg).